The primary structure comprises 263 residues: 3-methyl-2-oxobutanoate hydroxymethyltransferase (263 aa).

Residues Asp46 and Asp85 each contribute to the Mg(2+) site. 3-methyl-2-oxobutanoate is bound by residues 46–47, Asp85, and Lys115; that span reads DS. Glu117 contacts Mg(2+). Glu180 acts as the Proton acceptor in catalysis.

It belongs to the PanB family. Homodecamer; pentamer of dimers. Mg(2+) is required as a cofactor.

It localises to the cytoplasm. The catalysed reaction is 3-methyl-2-oxobutanoate + (6R)-5,10-methylene-5,6,7,8-tetrahydrofolate + H2O = 2-dehydropantoate + (6S)-5,6,7,8-tetrahydrofolate. It participates in cofactor biosynthesis; (R)-pantothenate biosynthesis; (R)-pantoate from 3-methyl-2-oxobutanoate: step 1/2. In terms of biological role, catalyzes the reversible reaction in which hydroxymethyl group from 5,10-methylenetetrahydrofolate is transferred onto alpha-ketoisovalerate to form ketopantoate. The protein is 3-methyl-2-oxobutanoate hydroxymethyltransferase of Desulforapulum autotrophicum (strain ATCC 43914 / DSM 3382 / VKM B-1955 / HRM2) (Desulfobacterium autotrophicum).